Consider the following 652-residue polypeptide: DNA ligase (652 aa).

Residues Asp-29–Asp-33, Ser-78–Leu-79, and Glu-107 contribute to the NAD(+) site. Residue Lys-109 is the N6-AMP-lysine intermediate of the active site. 4 residues coordinate NAD(+): Arg-130, Glu-164, Lys-278, and Lys-302. The Zn(2+) site is built by Cys-395, Cys-398, Cys-413, and Cys-418. One can recognise a BRCT domain in the interval Asp-577 to Leu-652.

It belongs to the NAD-dependent DNA ligase family. LigA subfamily. It depends on Mg(2+) as a cofactor. The cofactor is Mn(2+).

It catalyses the reaction NAD(+) + (deoxyribonucleotide)n-3'-hydroxyl + 5'-phospho-(deoxyribonucleotide)m = (deoxyribonucleotide)n+m + AMP + beta-nicotinamide D-nucleotide.. Its function is as follows. DNA ligase that catalyzes the formation of phosphodiester linkages between 5'-phosphoryl and 3'-hydroxyl groups in double-stranded DNA using NAD as a coenzyme and as the energy source for the reaction. It is essential for DNA replication and repair of damaged DNA. This Streptococcus suis (strain 05ZYH33) protein is DNA ligase.